Consider the following 342-residue polypeptide: DNA primase small subunit PriS (342 aa).

Active-site residues include Asp97, Asp99, and Asp236.

This sequence belongs to the eukaryotic-type primase small subunit family. As to quaternary structure, heterodimer of a small subunit (PriS) and a large subunit (PriL). Mg(2+) serves as cofactor. Requires Mn(2+) as cofactor.

In terms of biological role, catalytic subunit of DNA primase, an RNA polymerase that catalyzes the synthesis of short RNA molecules used as primers for DNA polymerase during DNA replication. The small subunit contains the primase catalytic core and has DNA synthesis activity on its own. Binding to the large subunit stabilizes and modulates the activity, increasing the rate of DNA synthesis while decreasing the length of the DNA fragments, and conferring RNA synthesis capability. The DNA polymerase activity may enable DNA primase to also catalyze primer extension after primer synthesis. May also play a role in DNA repair. This is DNA primase small subunit PriS from Aeropyrum pernix (strain ATCC 700893 / DSM 11879 / JCM 9820 / NBRC 100138 / K1).